The primary structure comprises 196 residues: ATP-dependent Clp protease proteolytic subunit (196 aa).

S101 functions as the Nucleophile in the catalytic mechanism. The active site involves H126.

It belongs to the peptidase S14 family. As to quaternary structure, component of the chloroplastic Clp protease core complex.

The protein localises to the plastid. It localises to the chloroplast stroma. It catalyses the reaction Hydrolysis of proteins to small peptides in the presence of ATP and magnesium. alpha-casein is the usual test substrate. In the absence of ATP, only oligopeptides shorter than five residues are hydrolyzed (such as succinyl-Leu-Tyr-|-NHMec, and Leu-Tyr-Leu-|-Tyr-Trp, in which cleavage of the -Tyr-|-Leu- and -Tyr-|-Trp bonds also occurs).. Functionally, cleaves peptides in various proteins in a process that requires ATP hydrolysis. Has a chymotrypsin-like activity. Plays a major role in the degradation of misfolded proteins. The polypeptide is ATP-dependent Clp protease proteolytic subunit (Spinacia oleracea (Spinach)).